A 438-amino-acid polypeptide reads, in one-letter code: Enolase 1 (438 aa).

Residues His160 and Glu169 each coordinate substrate. Glu212 acts as the Proton donor in catalysis. Asp247, Glu296, and Asp321 together coordinate Mg(2+). The substrate site is built by Glu296 and Asp321. The active-site Proton acceptor is Lys346. Residues 373–376 and Lys397 each bind substrate; that span reads SHRS.

Belongs to the enolase family. Homodimer. The cofactor is Mg(2+).

Its subcellular location is the cytoplasm. It carries out the reaction (2R)-2-phosphoglycerate = phosphoenolpyruvate + H2O. The protein operates within carbohydrate degradation; glycolysis; pyruvate from D-glyceraldehyde 3-phosphate: step 4/5. The polypeptide is Enolase 1 (ENO1) (Candida glabrata (strain ATCC 2001 / BCRC 20586 / JCM 3761 / NBRC 0622 / NRRL Y-65 / CBS 138) (Yeast)).